We begin with the raw amino-acid sequence, 421 residues long: U-box domain-containing protein 26 (421 aa).

The region spanning 13–87 (QIPYHFRCPI…QEWCVANRSN (75 aa)) is the U-box domain.

The catalysed reaction is S-ubiquitinyl-[E2 ubiquitin-conjugating enzyme]-L-cysteine + [acceptor protein]-L-lysine = [E2 ubiquitin-conjugating enzyme]-L-cysteine + N(6)-ubiquitinyl-[acceptor protein]-L-lysine.. The protein operates within protein modification; protein ubiquitination. Functionally, functions as an E3 ubiquitin ligase. The polypeptide is U-box domain-containing protein 26 (PUB26) (Arabidopsis thaliana (Mouse-ear cress)).